The chain runs to 353 residues: Probable tRNA pseudouridine synthase B (353 aa).

D45 acts as the Nucleophile in catalysis. Residues 211-287 (YPKIVAKKSA…DHIFVEAKHG (77 aa)) enclose the PUA domain. The disordered stretch occupies residues 292–353 (VRDREKDVQR…TGVHRRPGSH (62 aa)). Basic and acidic residues predominate over residues 309–328 (NIRDAAHGPDSRTGRGRKET). A compositionally biased stretch (basic residues) spans 336 to 353 (RVRKLQNKTGVHRRPGSH).

The protein belongs to the pseudouridine synthase TruB family. Type 2 subfamily.

It carries out the reaction uridine(55) in tRNA = pseudouridine(55) in tRNA. In terms of biological role, could be responsible for synthesis of pseudouridine from uracil-55 in the psi GC loop of transfer RNAs. The protein is Probable tRNA pseudouridine synthase B of Thermoplasma volcanium (strain ATCC 51530 / DSM 4299 / JCM 9571 / NBRC 15438 / GSS1).